The sequence spans 92 residues: MSRSLKKGPFVDGYLLKKAETTRSSGRKEVIKMWSRRSTILPQFVGLTFGVHNGKKHVPVLVTEDMVGHKFGEFSPTRTYFGHTSDKKAKKG.

The protein belongs to the universal ribosomal protein uS19 family.

Its function is as follows. Protein S19 forms a complex with S13 that binds strongly to the 16S ribosomal RNA. This chain is Small ribosomal subunit protein uS19, found in Parvibaculum lavamentivorans (strain DS-1 / DSM 13023 / NCIMB 13966).